Reading from the N-terminus, the 868-residue chain is Leucine--tRNA ligase (868 aa).

The short motif at 42–52 (PYPSGKLHMGH) is the 'HIGH' region element. The short motif at 627 to 631 (KMAKS) is the 'KMSKS' region element. Lys-630 provides a ligand contact to ATP.

It belongs to the class-I aminoacyl-tRNA synthetase family.

The protein resides in the cytoplasm. It carries out the reaction tRNA(Leu) + L-leucine + ATP = L-leucyl-tRNA(Leu) + AMP + diphosphate. This is Leucine--tRNA ligase from Pseudomonas fluorescens (strain Pf0-1).